We begin with the raw amino-acid sequence, 426 residues long: Branched-chain amino acid permease BrnQ (426 aa).

The next 12 membrane-spanning stretches (helical) occupy residues 11 to 31 (LMLFSMFFGAGNLIFPPMLGL), 41 to 61 (ILGFLATSVLLPVLAIIAVVL), 76 to 96 (IFGLVFPIAAYLSIGAFYALP), 111 to 131 (NALYSGLFNFVFFAVALALSW), 140 to 160 (LGKWLTPALLTLIVVLVVLSV), 186 to 206 (GYMTMDAIAALAFGIVVISAF), 219 to 239 (VVSAFIAGILLALVYLGLGSI), 268 to 288 (IMFVAILILACMTTAVGLISA), 296 to 316 (LLPGVKYHVWATVFALISFGV), 324 to 344 (VLAVAAPVISFIYPSAITLVF), 358 to 378 (TYLFGIWTAVVWALFMSIPAL), and 390 to 410 (MSLGWVVPVLVASAIGLAIDW).

The protein belongs to the branched chain amino acid transporter family.

Its subcellular location is the cell membrane. Branched chain amino acid transport system, which transports isoleucine. The polypeptide is Branched-chain amino acid permease BrnQ (Corynebacterium glutamicum (strain ATCC 13032 / DSM 20300 / JCM 1318 / BCRC 11384 / CCUG 27702 / LMG 3730 / NBRC 12168 / NCIMB 10025 / NRRL B-2784 / 534)).